A 245-amino-acid polypeptide reads, in one-letter code: DNA polymerase sliding clamp (245 aa).

This sequence belongs to the PCNA family. Homotrimer. The subunits circularize to form a toroid; DNA passes through its center. Replication factor C (RFC) is required to load the toroid on the DNA.

In terms of biological role, sliding clamp subunit that acts as a moving platform for DNA processing. Responsible for tethering the catalytic subunit of DNA polymerase and other proteins to DNA during high-speed replication. The protein is DNA polymerase sliding clamp of Methanosarcina barkeri (strain Fusaro / DSM 804).